We begin with the raw amino-acid sequence, 156 residues long: Small ribosomal subunit protein uS7 (156 aa).

This sequence belongs to the universal ribosomal protein uS7 family. As to quaternary structure, part of the 30S ribosomal subunit. Contacts proteins S9 and S11.

Its function is as follows. One of the primary rRNA binding proteins, it binds directly to 16S rRNA where it nucleates assembly of the head domain of the 30S subunit. Is located at the subunit interface close to the decoding center, probably blocks exit of the E-site tRNA. This Cellvibrio japonicus (strain Ueda107) (Pseudomonas fluorescens subsp. cellulosa) protein is Small ribosomal subunit protein uS7.